The sequence spans 354 residues: 3-isopropylmalate dehydrogenase (354 aa).

Position 76 to 87 (G76 to E87) interacts with NAD(+). Residues R94, R104, R130, and D215 each contribute to the substrate site. 3 residues coordinate Mg(2+): D215, D239, and D243. G273–N285 is a binding site for NAD(+).

The protein belongs to the isocitrate and isopropylmalate dehydrogenases family. LeuB type 1 subfamily. In terms of assembly, homodimer. Mg(2+) is required as a cofactor. It depends on Mn(2+) as a cofactor.

The protein localises to the cytoplasm. The catalysed reaction is (2R,3S)-3-isopropylmalate + NAD(+) = 4-methyl-2-oxopentanoate + CO2 + NADH. It participates in amino-acid biosynthesis; L-leucine biosynthesis; L-leucine from 3-methyl-2-oxobutanoate: step 3/4. Catalyzes the oxidation of 3-carboxy-2-hydroxy-4-methylpentanoate (3-isopropylmalate) to 3-carboxy-4-methyl-2-oxopentanoate. The product decarboxylates to 4-methyl-2 oxopentanoate. This Bacillus thuringiensis subsp. konkukian (strain 97-27) protein is 3-isopropylmalate dehydrogenase.